A 427-amino-acid chain; its full sequence is Glutamate-1-semialdehyde 2,1-aminomutase (427 aa).

N6-(pyridoxal phosphate)lysine is present on lysine 265.

Belongs to the class-III pyridoxal-phosphate-dependent aminotransferase family. HemL subfamily. As to quaternary structure, homodimer. Requires pyridoxal 5'-phosphate as cofactor.

Its subcellular location is the cytoplasm. It carries out the reaction (S)-4-amino-5-oxopentanoate = 5-aminolevulinate. It functions in the pathway porphyrin-containing compound metabolism; protoporphyrin-IX biosynthesis; 5-aminolevulinate from L-glutamyl-tRNA(Glu): step 2/2. The polypeptide is Glutamate-1-semialdehyde 2,1-aminomutase (Pseudomonas syringae pv. tomato (strain ATCC BAA-871 / DC3000)).